The chain runs to 152 residues: Toxin coregulated pilus biosynthesis protein S (152 aa).

The signal sequence occupies residues 1 to 20; the sequence is MNIKLSFISIAFLSLSFNVA.

The protein localises to the periplasm. It is found in the secreted. Its function is as follows. The toxin coregulated pilus (TCP) is essential for successful colonization of the small intestine. The chain is Toxin coregulated pilus biosynthesis protein S (tcpS) from Vibrio cholerae serotype O1 (strain ATCC 39315 / El Tor Inaba N16961).